Here is a 123-residue protein sequence, read N- to C-terminus: MATINQLVRQPRKRVVEKSDVPALQNCPQRRGVCTRVYTTTPKKPNSALRKVCRVRLTNGYEVASYIGGEGHNLQEHSVVLIRGGRVRDLPGVRYHTVRGSLDTSGVKDRKQGRSKYGAKRPK.

Asp-89 bears the 3-methylthioaspartic acid mark. Residues 101 to 123 (SLDTSGVKDRKQGRSKYGAKRPK) are disordered. Positions 113–123 (GRSKYGAKRPK) are enriched in basic residues.

The protein belongs to the universal ribosomal protein uS12 family. As to quaternary structure, part of the 30S ribosomal subunit. Contacts proteins S8 and S17. May interact with IF1 in the 30S initiation complex.

With S4 and S5 plays an important role in translational accuracy. In terms of biological role, interacts with and stabilizes bases of the 16S rRNA that are involved in tRNA selection in the A site and with the mRNA backbone. Located at the interface of the 30S and 50S subunits, it traverses the body of the 30S subunit contacting proteins on the other side and probably holding the rRNA structure together. The combined cluster of proteins S8, S12 and S17 appears to hold together the shoulder and platform of the 30S subunit. This is Small ribosomal subunit protein uS12 from Stutzerimonas stutzeri (strain A1501) (Pseudomonas stutzeri).